The primary structure comprises 220 residues: Iron-sulfur cluster repair protein YtfE (220 aa).

Belongs to the RIC family. YtfE subfamily. As to quaternary structure, homodimer.

Its subcellular location is the cytoplasm. Di-iron-containing protein involved in the repair of iron-sulfur clusters damaged by oxidative and nitrosative stress conditions. The chain is Iron-sulfur cluster repair protein YtfE from Escherichia coli O81 (strain ED1a).